Here is a 556-residue protein sequence, read N- to C-terminus: 2-succinyl-5-enolpyruvyl-6-hydroxy-3-cyclohexene-1-carboxylate synthase (556 aa).

The protein belongs to the TPP enzyme family. MenD subfamily. In terms of assembly, homodimer. Mg(2+) serves as cofactor. Requires Mn(2+) as cofactor. Thiamine diphosphate is required as a cofactor.

It catalyses the reaction isochorismate + 2-oxoglutarate + H(+) = 5-enolpyruvoyl-6-hydroxy-2-succinyl-cyclohex-3-ene-1-carboxylate + CO2. It participates in quinol/quinone metabolism; 1,4-dihydroxy-2-naphthoate biosynthesis; 1,4-dihydroxy-2-naphthoate from chorismate: step 2/7. The protein operates within quinol/quinone metabolism; menaquinone biosynthesis. Functionally, catalyzes the thiamine diphosphate-dependent decarboxylation of 2-oxoglutarate and the subsequent addition of the resulting succinic semialdehyde-thiamine pyrophosphate anion to isochorismate to yield 2-succinyl-5-enolpyruvyl-6-hydroxy-3-cyclohexene-1-carboxylate (SEPHCHC). The chain is 2-succinyl-5-enolpyruvyl-6-hydroxy-3-cyclohexene-1-carboxylate synthase from Mycobacterium leprae (strain Br4923).